Consider the following 248-residue polypeptide: tRNA pseudouridine synthase A (248 aa).

Catalysis depends on D53, which acts as the Nucleophile. Y111 contributes to the substrate binding site.

This sequence belongs to the tRNA pseudouridine synthase TruA family. In terms of assembly, homodimer.

The catalysed reaction is uridine(38/39/40) in tRNA = pseudouridine(38/39/40) in tRNA. In terms of biological role, formation of pseudouridine at positions 38, 39 and 40 in the anticodon stem and loop of transfer RNAs. This chain is tRNA pseudouridine synthase A, found in Listeria monocytogenes serovar 1/2a (strain ATCC BAA-679 / EGD-e).